The primary structure comprises 111 residues: Nitrogen regulatory protein P-II (111 aa).

The residue at position 50 (Y50) is an O-UMP-tyrosine.

This sequence belongs to the P(II) protein family. In terms of assembly, homotrimer.

Its function is as follows. In nitrogen-limiting conditions, when the ratio of Gln to 2-ketoglutarate decreases, P-II is uridylylated to P-II-UMP. P-II-UMP allows the deadenylation of glutamine synthetase (GS), thus activating the enzyme. Conversely, in nitrogen excess P-II is deuridylated and promotes the adenylation of GS. P-II indirectly controls the transcription of the GS gene (glnA). P-II prevents NR-II-catalyzed conversion of NR-I to NR-I-phosphate, the transcriptional activator of glnA. When P-II is uridylylated to P-II-UMP, these events are reversed. This chain is Nitrogen regulatory protein P-II (glnB), found in Rhizobium leguminosarum bv. viciae.